The following is a 466-amino-acid chain: Asparagine--tRNA ligase (466 aa).

Belongs to the class-II aminoacyl-tRNA synthetase family. In terms of assembly, homodimer.

It localises to the cytoplasm. The enzyme catalyses tRNA(Asn) + L-asparagine + ATP = L-asparaginyl-tRNA(Asn) + AMP + diphosphate + H(+). The protein is Asparagine--tRNA ligase of Buchnera aphidicola subsp. Acyrthosiphon pisum (strain APS) (Acyrthosiphon pisum symbiotic bacterium).